A 631-amino-acid chain; its full sequence is Phosphomethylpyrimidine synthase (631 aa).

Substrate-binding positions include N239, M268, Y297, H333, 353–355, 394–397, and E433; these read SRG and DGLR. Position 437 (H437) interacts with Zn(2+). Y460 is a binding site for substrate. Residue H501 participates in Zn(2+) binding. C581, C584, and C589 together coordinate [4Fe-4S] cluster.

It belongs to the ThiC family. In terms of assembly, homodimer. The cofactor is [4Fe-4S] cluster.

The catalysed reaction is 5-amino-1-(5-phospho-beta-D-ribosyl)imidazole + S-adenosyl-L-methionine = 4-amino-2-methyl-5-(phosphooxymethyl)pyrimidine + CO + 5'-deoxyadenosine + formate + L-methionine + 3 H(+). The protein operates within cofactor biosynthesis; thiamine diphosphate biosynthesis. Functionally, catalyzes the synthesis of the hydroxymethylpyrimidine phosphate (HMP-P) moiety of thiamine from aminoimidazole ribotide (AIR) in a radical S-adenosyl-L-methionine (SAM)-dependent reaction. The chain is Phosphomethylpyrimidine synthase from Salmonella paratyphi A (strain AKU_12601).